The chain runs to 653 residues: Calpain-10 (653 aa).

In terms of domain architecture, Calpain catalytic spans 13–321 (LFRDAAFPAA…FDEITIGYPI (309 aa)). Active-site residues include Cys-73, His-238, and Asn-263. Domain III stretches follow at residues 322-494 (TEAG…VSLS) and 513-653 (EWGT…PSWQ).

It belongs to the peptidase C2 family.

Functionally, calcium-regulated non-lysosomal thiol-protease which catalyzes limited proteolysis of substrates involved in cytoskeletal remodeling and signal transduction. May play a role in insulin-stimulated glucose uptake. The polypeptide is Calpain-10 (CAPN10) (Macaca fascicularis (Crab-eating macaque)).